Reading from the N-terminus, the 298-residue chain is uncharacterized protein (298 aa).

Residues T43 and Y105 each act as charge relay system in the active site. Catalysis depends on Y131, which acts as the Proton donor. Catalysis depends on K159, which acts as the Schiff-base intermediate with substrate.

It belongs to the DapA family. Homotetramer.

Its subcellular location is the cytoplasm. This is an uncharacterized protein from Pyrococcus furiosus (strain ATCC 43587 / DSM 3638 / JCM 8422 / Vc1).